A 141-amino-acid chain; its full sequence is uncharacterized protein (141 aa).

This is an uncharacterized protein from Arabidopsis thaliana (Mouse-ear cress).